The sequence spans 656 residues: Vi polysaccharide export protein VexE (656 aa).

In terms of biological role, may be involved in translocation of the Vi antigen. The polypeptide is Vi polysaccharide export protein VexE (vexE) (Salmonella typhi).